Consider the following 152-residue polypeptide: Transcriptional regulator MraZ (152 aa).

SpoVT-AbrB domains lie at 5–52 (ASAI…PFDE) and 81–124 (AHEC…DETA).

Belongs to the MraZ family. Forms oligomers.

The protein resides in the cytoplasm. The protein localises to the nucleoid. The protein is Transcriptional regulator MraZ of Shewanella sediminis (strain HAW-EB3).